Consider the following 127-residue polypeptide: UPF0102 protein Glov_2230 (127 aa).

This sequence belongs to the UPF0102 family.

This is UPF0102 protein Glov_2230 from Trichlorobacter lovleyi (strain ATCC BAA-1151 / DSM 17278 / SZ) (Geobacter lovleyi).